The sequence spans 302 residues: Trans-4-hydroxy-L-proline dehydratase activating enzyme (302 aa).

Positions 14-297 constitute a Radical SAM core domain; that stretch reads HDGPGIRSTV…KRLFEASNFN (284 aa). 7 residues coordinate [4Fe-4S] cluster: C28, C32, C35, C54, C57, C60, and C93. Residue 34-36 participates in S-adenosyl-L-methionine binding; sequence WCH. 4Fe-4S ferredoxin-type domains are found at residues 45-74 and 75-103; these read KQVL…KGET and KICL…IVGQ. S-adenosyl-L-methionine is bound by residues G133, 183-185, and H257; that span reads DIK.

It belongs to the organic radical-activating enzymes family. Requires [4Fe-4S] cluster as cofactor.

The catalysed reaction is glycyl-[protein] + reduced [flavodoxin] + S-adenosyl-L-methionine = glycin-2-yl radical-[protein] + semiquinone [flavodoxin] + 5'-deoxyadenosine + L-methionine + H(+). In terms of biological role, catalyzes activation of the trans-4-hydroxy-L-proline dehydratase under anaerobic conditions by generation of an organic free radical on a glycine residue, via a homolytic cleavage of S-adenosyl-L-methionine (SAM). Is involved in the anaerobic degradation of 4-hydroxyproline. The sequence is that of Trans-4-hydroxy-L-proline dehydratase activating enzyme from Clostridioides difficile (Peptoclostridium difficile).